A 499-amino-acid chain; its full sequence is Potassium channel subfamily K member 5 (499 aa).

Topologically, residues 1-7 are cytoplasmic; the sequence is MVDRGPL. The chain crosses the membrane as a helical span at residues 8–26; it reads LTSAIIFYLAIGAAIFEVL. An N-linked (GlcNAc...) asparagine glycan is attached at N77. Residues 85-112 constitute an intramembrane region (pore-forming); it reads WPNAMIFAATVITTIGYGNVAPKTPAGR. T98, I99, G100, and Y101 together coordinate K(+). A selectivity filter 1 region spans residues 98–103; sequence TIGYGN. A helical transmembrane segment spans residues 113–133; that stretch reads LFCVFYGLFGVPLCLTWISAL. Residues 134 to 157 are Cytoplasmic-facing; the sequence is GKFFGGRAKRLGQFLTKRGVSLRK. Residues 158–180 form a helical membrane-spanning segment; that stretch reads AQITCTVIFIVWGVLVHLVIPPF. Positions 190–215 form an intramembrane region, pore-forming; sequence YIEGLYYSFITISTIGFGDFVAGVNP. T203, I204, G205, and F206 together coordinate K(+). The interval 203–208 is selectivity filter 2; it reads TIGFGD. Residues 230–250 traverse the membrane as a helical segment; sequence WIYLGLAWLSLFVNWKVSMFV. At 251-325 the chain is on the cytoplasmic side; it reads EVHKAIKKRR…SGGGETGPGP (75 aa). 3 disordered regions span residues 312-335, 360-388, and 428-499; these read AMKT…GGLP, QTLR…SPAP, and GLSD…PKGT. Over residues 316-334 the composition is skewed to gly residues; it reads SGGGETGPGPGLGPQGGGL. The span at 370–382 shows a compositional bias: basic and acidic residues; the sequence is RSPDEEAVARAPE. Phosphoserine is present on S371. Residues 466–480 show a composition bias toward low complexity; it reads SSSESTFTSTESELS.

The protein belongs to the two pore domain potassium channel (TC 1.A.1.8) family. In terms of assembly, homodimer; disulfide-linked. Heterodimer with KCNK16 and KCNK17. As to expression, abundant expression in kidney, also detected in liver, placenta and small intestine. In the kidney, expression is restricted to the distal tubules and collecting ducts. Not expressed in proximal tubules or glomeruli. Expressed in pancreas, in both endocrine (alpha, beta, gamma, delta, and epsilon) and exocrine (acinar and ductal) cells.

The protein localises to the membrane. It carries out the reaction K(+)(in) = K(+)(out). Its activity is regulated as follows. The channel conductance is stimulated by extracellular alkaline pH. Inhibited by quinine, quinidine and external acidification. In terms of biological role, k(+) channel that conducts voltage-dependent outward rectifying currents upon membrane depolarization. Voltage sensing is coupled to K(+) electrochemical gradient in an 'ion flux gating' mode where outward but not inward ion flow opens the gate. Homo- and heterodimerizes to form functional channels with distinct regulatory and gating properties. This Homo sapiens (Human) protein is Potassium channel subfamily K member 5.